A 378-amino-acid polypeptide reads, in one-letter code: MFLKAVVLTLSLVAITGARAEVSADQVATVVWDYFSQLSNNAKEAVEHLQQSELTQQLKSVTKGHISALRVIEKGRERNSWEHSRRVGPCEIMGRQVGIFGQPLRVATLPNCDLPVNSVPPNTHLSQAVGPYAEELRTQVNTHAEQLRNQLTSHAQRMQSALRQNVDDLHSSLTPFADELKAKIDQNVEELKGHLTPYTDELKVKIDQNVEELRRSLAPYAQDVQEKLNHQLEGLAFQMKKNAEELKAKISANAEELRQRLAPVAEDVRGKLKDNTAGLHKSLAELSSRLDQQVEEFRRNVGPYGETFNKALLQQVEELRQKLGPYAGDMEDHLSFLEKDLRDKVNSFFSTLQEKESQDTPVALPKQEQEQSAVPLES.

An N-terminal signal peptide occupies residues 1–20; sequence MFLKAVVLTLSLVAITGARA. 13 consecutive repeat copies span residues 33–54, 60–81, 82–98, 110–130, 131–152, 153–174, 175–196, 197–218, 219–240, 241–262, 263–280, 281–302, and 303–324. Residues 33-324 form a 13 X 22 AA approximate tandem repeats region; the sequence is DYFSQLSNNA…QVEELRQKLG (292 aa). A disordered region spans residues 354 to 378; the sequence is EKESQDTPVALPKQEQEQSAVPLES.

The protein belongs to the apolipoprotein A1/A4/E family. Homodimer.

It is found in the secreted. May have a role in chylomicrons and VLDL secretion and catabolism. Required for efficient activation of lipoprotein lipase by ApoC-II; potent activator of LCAT. Apoa-IV is a major component of HDL and chylomicrons. The protein is Apolipoprotein A-IV of Canis lupus familiaris (Dog).